The sequence spans 189 residues: Peptide deformylase (189 aa).

Fe cation-binding residues include cysteine 93 and histidine 135. Residue glutamate 136 is part of the active site. Fe cation is bound at residue histidine 139.

It belongs to the polypeptide deformylase family. The cofactor is Fe(2+).

It carries out the reaction N-terminal N-formyl-L-methionyl-[peptide] + H2O = N-terminal L-methionyl-[peptide] + formate. Functionally, removes the formyl group from the N-terminal Met of newly synthesized proteins. Requires at least a dipeptide for an efficient rate of reaction. N-terminal L-methionine is a prerequisite for activity but the enzyme has broad specificity at other positions. The sequence is that of Peptide deformylase from Karelsulcia muelleri (strain GWSS) (Sulcia muelleri).